The primary structure comprises 305 residues: Glycine--tRNA ligase alpha subunit (305 aa).

This sequence belongs to the class-II aminoacyl-tRNA synthetase family. Tetramer of two alpha and two beta subunits.

The protein resides in the cytoplasm. The enzyme catalyses tRNA(Gly) + glycine + ATP = glycyl-tRNA(Gly) + AMP + diphosphate. This is Glycine--tRNA ligase alpha subunit from Streptococcus pyogenes serotype M2 (strain MGAS10270).